A 58-amino-acid chain; its full sequence is Small ribosomal subunit protein eS27 (58 aa).

Positions 10, 13, 29, and 32 each coordinate Zn(2+). The C4-type zinc finger occupies 10-32 (CPDCEHEQVIFDHPSTIVKCIIC).

This sequence belongs to the eukaryotic ribosomal protein eS27 family. Part of the 30S ribosomal subunit. The cofactor is Zn(2+).

This is Small ribosomal subunit protein eS27 from Archaeoglobus fulgidus (strain ATCC 49558 / DSM 4304 / JCM 9628 / NBRC 100126 / VC-16).